The sequence spans 263 residues: Hemin import ATP-binding protein HmuV (263 aa).

Residues 2-242 (IEARDVSVDI…DLIEKVFDCR (241 aa)) form the ABC transporter domain. An ATP-binding site is contributed by 34–41 (GPNGSGKT).

This sequence belongs to the ABC transporter superfamily. Heme (hemin) importer (TC 3.A.1.14.5) family. In terms of assembly, the complex is composed of two ATP-binding proteins (HmuV), two transmembrane proteins (HmuU) and a solute-binding protein (HmuT).

It is found in the cell inner membrane. Part of the ABC transporter complex HmuTUV involved in hemin import. Responsible for energy coupling to the transport system. The polypeptide is Hemin import ATP-binding protein HmuV (Mesorhizobium japonicum (strain LMG 29417 / CECT 9101 / MAFF 303099) (Mesorhizobium loti (strain MAFF 303099))).